The chain runs to 834 residues: Copper-exporting P-type ATPase (834 aa).

The Cytoplasmic portion of the chain corresponds to 2–186; the sequence is SQTIDLTLDG…TAVATMKRFR (185 aa). HMA domains lie at 3 to 64 and 99 to 162; these read QTID…YDAS and DSQQ…YGAE. Cysteine 14, cysteine 17, cysteine 110, and cysteine 113 together coordinate Cu(+). 2 consecutive short sequence motifs (CXXC motif) follow at residues 14–17 and 110–113; these read CGHC and CASC. The chain crosses the membrane as a helical span at residues 187-207; that stretch reads WQAIVALAVGIPVMVWGMIGD. Over 208–217 the chain is Periplasmic; loop 1; it reads NMMVTADNRS. The chain crosses the membrane as a helical span at residues 218 to 238; it reads LWLVIGLITLAVMVFAGGHFY. Residues 239-253 lie on the Cytoplasmic side of the membrane; that stretch reads RSAWKSLLNGAATMD. Residues 254 to 274 traverse the membrane as a helical segment; the sequence is TLVALGTGVAWLYSMSVNLWP. The Periplasmic; loop 2 portion of the chain corresponds to 275 to 283; that stretch reads QWFPMEARH. A helical transmembrane segment spans residues 284-304; that stretch reads LYYEASAMIIGLINLGHMLEA. Residues 305 to 437 lie on the Cytoplasmic side of the membrane; the sequence is RARQRSSKAL…EIGQLADKIS (133 aa). The chain crosses the membrane as a helical span at residues 438 to 458; sequence AVFVPVVVVIALVSAAIWYFF. Residues 459–463 lie on the Periplasmic; loop 3 side of the membrane; the sequence is GPAPQ. The chain crosses the membrane as a helical span at residues 464 to 484; sequence IVYTLVIATTVLIIACPCALG. Residues 485–778 lie on the Cytoplasmic side of the membrane; sequence LATPMSIISG…ATLHNMKQNL (294 aa). Aspartate 523 (4-aspartylphosphate intermediate) is an active-site residue. Aspartate 720 and aspartate 724 together coordinate Mg(2+). Residues 779–799 traverse the membrane as a helical segment; it reads LGAFIYNSIGIPVAAGILWPF. Threonine 800 is a topological domain (periplasmic; loop 4). A helical membrane pass occupies residues 801-821; it reads GTLLNPVVAGAAMALSSITVV. Residues 822–834 are Cytoplasmic-facing; that stretch reads SNANRLLRFKPKE.

The protein belongs to the cation transport ATPase (P-type) (TC 3.A.3) family. Type IB subfamily. In terms of assembly, copper-exporting P-type ATPase interacts with apo-periplasmic copper chaperone CusF; when CusF is precharged with copper it binds very little CopA. The periplasmic loops of CopA, especially the first half of loop 1, play a large role in binding to CusF.

The protein resides in the cell inner membrane. Its subcellular location is the cytoplasm. It carries out the reaction Cu(+)(in) + ATP + H2O = Cu(+)(out) + ADP + phosphate + H(+). Export is inhibited by vanadate. Phosphorylation is inhibited by vanadate and sensitive to KOH and hydroxylamine; it is not inhibited by azide. Phosphorylation is Cu(+) not Cu(2+)-dependent. ATPase activity is inhibited by bathocuproindisulfonate (BCDS), which chelates Cu(+) but not Cu(2+), and stimulated 3-4-fold by Cu(+). ATPase activity is inhibited by Cu(2+) plus DTT or Ag(+). Its function is as follows. Exports Cu(+) from the cytoplasm to the periplasm. Binds 2 Cu(+) ions per monomer, which are transferred to periplasmic copper chaperone CusF upon ATP hydrolysis. In vitro an excess of CusF over CopA is required for efficient transfer. May also be involved in silver export. Functionally, mRNA is subject to programmed ribosomal frameshifting which produces a cytoplasmic copper chaperone CopA(Z) that corresponds to the first HMA domain. The soluble form is essential for cell survivial in the presence of CuSO(4); in growth competition experiments between wild-type and a version that prevents expression of CopA(Z) after 50 generations the non-CopA(Z) version is nearly extinct. The first HMA domain (residues 1-70) can be replaced by B.subtilis Cu chaperone CopZ. The polypeptide is Copper-exporting P-type ATPase (Escherichia coli (strain K12)).